The sequence spans 189 residues: Resolvase (189 aa).

In terms of domain architecture, Resolvase/invertase-type recombinase catalytic spans 1-139; it reads MLVGYARVST…EGLRSAKARG (139 aa). The active-site O-(5'-phospho-DNA)-serine intermediate is Ser9. Positions 130–151 are disordered; sequence EGLRSAKARGRNGGRPSKRNDK. Residues 165–184 constitute a DNA-binding region (H-T-H motif); it reads IVDIVKQTELSRATVYRILK.

The protein belongs to the site-specific recombinase resolvase family.

In terms of biological role, a likely role for the res protein would be to stabilize pCP13 by reducing the number of plasmid multimers resulting from homologous recombination. This Clostridium perfringens (strain 13 / Type A) protein is Resolvase (res).